The following is a 381-amino-acid chain: 5-cytosine rRNA methyltransferase NSUN4 (381 aa).

A mitochondrion-targeting transit peptide spans 1 to 25 (MAAPVLRCVRKLLKLVDFTPVPRRY). 4 residues coordinate S-adenosyl-L-methionine: Gly-182, Gly-183, Lys-184, and Asp-201. The residue at position 203 (Ser-203) is a Phosphoserine. S-adenosyl-L-methionine is bound by residues Arg-206, Asp-234, Gly-235, and Asp-252. Cys-307 serves as the catalytic Nucleophile.

The protein belongs to the class I-like SAM-binding methyltransferase superfamily. RsmB/NOP family. Heterodimer with MTERFD2/MTERF4; this interaction seems to be required for NSUN4 recruitment to the mitochondrial large ribosomal subunit.

The protein resides in the mitochondrion. The enzyme catalyses a cytidine in rRNA + S-adenosyl-L-methionine = a 5-methylcytidine in rRNA + S-adenosyl-L-homocysteine + H(+). It carries out the reaction a cytidine in mRNA + S-adenosyl-L-methionine = a 5-methylcytidine in mRNA + S-adenosyl-L-homocysteine + H(+). Functionally, mitochondrial RNA cytosine C(5)-methyltransferase that methylates cytosine to 5-methylcytosine (m5C) in various RNAs, such as rRNAs, mRNAs and some long non-coding RNAs (lncRNAs). Involved in mitochondrial ribosome small subunit (SSU) maturation by catalyzing methylation of mitochondrial 12S rRNA; the function is independent of MTERFD2/MTERF4 and assembled mitochondrial ribosome large subunit (LSU). Targeted to LSU by MTERFD2/MTERF4 and probably is involved in a final step in ribosome biogenesis to ensure that SSU and LSU are assembled. In vitro can methylate 16S rRNA of the LSU; the methylation is enhanced by MTERFD/MTERF4. Also acts as a regulator of innate immunity by marking double-stranded mitochondrial RNAs(mt-dsRNAs) generated in response to stress: catalyzes m5C modification on mitochondrial RNAs, such as a mRNAs and lncRNAs, with a preference for the termini of light-strand lncRNAs, promoting their degradation and cytosolic release. Modified light-strand lncRNAs are then recognized by C1QBP reader and recruited to the mitochondrial degradosome complex, which promotes their degradation. The chain is 5-cytosine rRNA methyltransferase NSUN4 from Mus musculus (Mouse).